The following is a 909-amino-acid chain: UPF0182 protein Moth_1139 (909 aa).

A run of 7 helical transmembrane segments spans residues 8–28 (FCLL…SHFL), 51–71 (VGIR…NLLF), 103–123 (LGIL…PLAA), 165–185 (LLIT…FIFN), 201–221 (LVHF…GFRL), 245–265 (LLPG…IIVL), and 277–297 (AGIL…PLAV). The tract at residues 843-862 (PAPAASPQPPSQAATGSPGN) is disordered.

It belongs to the UPF0182 family.

Its subcellular location is the cell membrane. The chain is UPF0182 protein Moth_1139 from Moorella thermoacetica (strain ATCC 39073 / JCM 9320).